The following is a 168-amino-acid chain: Luminal-binding protein 3 (168 aa).

Asparagine 120 carries an N-linked (GlcNAc...) asparagine glycan. Residues 148–168 (QRSGGASGGSSSSEEDGHDEL) are disordered. The Prevents secretion from ER signature appears at 165 to 168 (HDEL).

The protein belongs to the heat shock protein 70 family.

It localises to the endoplasmic reticulum lumen. In terms of biological role, probably plays a role in facilitating the assembly of multimeric protein complexes inside the ER. This is Luminal-binding protein 3 (BIP3) from Nicotiana tabacum (Common tobacco).